Here is a 189-residue protein sequence, read N- to C-terminus: Auxin-responsive protein IAA3 (189 aa).

Positions 12–16 (LRLGL) match the EAR-like (transcriptional repression) motif. A disordered region spans residues 42 to 65 (TDTEKEIESSSRKTETSPPRKAQI). Residues 43-56 (DTEKEIESSSRKTE) show a composition bias toward basic and acidic residues. The 88-residue stretch at 92–179 (GIYVKVSMDG…TCKRLRIMKG (88 aa)) folds into the PB1 domain.

It belongs to the Aux/IAA family. As to quaternary structure, homodimers and heterodimers. Interacts with TPL. Interacts with TIR1, the F-box component of the Skp1-Cdc53/cullin-F-box (SCFTIR1) E3 ubiquitin ligase complex. In terms of processing, phosphorylated by phytochrome A in vitro. As to expression, highly expressed in stems and flowers. Expressed in hypocotyls, cotyledons and leaves, but barely detected in roots. Expressed in root tips. In the root meristem, specifically detected at the vascular tissue transition zone.

The protein localises to the nucleus. In terms of biological role, aux/IAA proteins are short-lived transcriptional factors that function as repressors of early auxin response genes at low auxin concentrations. Repression is thought to result from the interaction with auxin response factors (ARFs), proteins that bind to the auxin-responsive promoter element (AuxRE). Plays a central role in auxin regulation of root growth, in gravitropism, and in lateral root formation. Regulated by an auxin-induced protein turnover. Formation of heterodimers with ARF proteins may alter their ability to modulate early auxin response genes expression. When activated by cytokinin, restricts the expression of the PIN genes to the vascular transition zone. Induction of SHY2 in the vascular transition zone restricts BRX expression to down-regulate PIN3 and thus limit meristem growth, but proper SHY2 expression requires BRX. Involved in meristem growth and in determining its size. May participate in strigolactone signaling to regulate meristem size and lateral root formation. In Arabidopsis thaliana (Mouse-ear cress), this protein is Auxin-responsive protein IAA3 (IAA3).